Consider the following 1131-residue polypeptide: Activity-dependent neuroprotector homeobox protein 2 (1131 aa).

The C2H2-type 1 zinc finger occupies 73–96 (YCCGLCKYSTKVLTSFKNHLHRYH). A C2H2-type 2; degenerate zinc finger spans residues 106 to 128 (IPCPNCVFASQPKVVGRHFRMFH). Residues Lys-118 and Lys-146 each participate in a glycyl lysine isopeptide (Lys-Gly) (interchain with G-Cter in SUMO2) cross-link. The C2H2-type 3; degenerate zinc finger occupies 155 to 178 (FTCLKCNFSNTLYYSMKKHVLVAH). Residues 215-240 (YYCKKCNANASSQDALMYHILTSDIH) form a C2H2-type 4 zinc finger. Low complexity predominate over residues 274-285 (LAAPANGSAPSA). The disordered stretch occupies residues 274-329 (LAAPANGSAPSAPAQPPCFHLALPQNSPSPAAGQPVTVAQGAPGSLTHSPPAAGQS). The C2H2-type 5; degenerate zinc-finger motif lies at 694–716 (KTCPVCNELFPSNVYQVHMEVAH). A C2H2-type 6; degenerate zinc finger spans residues 747–768 (VRCLSCKCLVSEEELIHHLLMH). 2 C2H2-type zinc fingers span residues 770–793 (LGCL…RNRH) and 875–898 (STCP…KERH). The C2H2-type 9; degenerate zinc-finger motif lies at 913–937 (FKCIHCCGVYTGNMTLAAIAVHLVR). Residues Lys-979 and Lys-1018 each participate in a glycyl lysine isopeptide (Lys-Gly) (interchain with G-Cter in SUMO2) cross-link. At Ser-1024 the chain carries Phosphoserine. Lys-1032 participates in a covalent cross-link: Glycyl lysine isopeptide (Lys-Gly) (interchain with G-Cter in SUMO1); alternate. Residue Lys-1032 forms a Glycyl lysine isopeptide (Lys-Gly) (interchain with G-Cter in SUMO2); alternate linkage. A DNA-binding region (homeobox) is located at residues 1043–1102 (PKKYEGRSYEEKKQFLKDYFHKKPYPSKKEIELLSSLFWVWKIDVASFFGKRRYICMKAI).

Belongs to the krueppel C2H2-type zinc-finger protein family. As to quaternary structure, may interact with SMARCA4/BRG1.

The protein localises to the nucleus. In terms of biological role, may be involved in transcriptional regulation. May play a role in neuronal function; perhaps involved in protection of brain tissues from oxidative stress. May be involved in erythroid differentiation. The polypeptide is Activity-dependent neuroprotector homeobox protein 2 (ADNP2) (Homo sapiens (Human)).